A 554-amino-acid polypeptide reads, in one-letter code: Folate synthesis bifunctional protein, mitochondrial (554 aa).

The transit peptide at 1–42 (MAPLLSQTLIHTGRFLLRRFLEPPPAVISAVAASRVCFHRYY) directs the protein to the mitochondrion. Residues 90–215 (VIALGSNIGN…SFVLAPLVDL (126 aa)) are HPPK. The 269-residue stretch at 273–541 (THVMGILNLT…NVRHNADAAK (269 aa)) folds into the Pterin-binding domain. The DHPS stretch occupies residues 275-554 (VMGILNLTPD…AMLRRRRSKG (280 aa)). Residue Asn-280 participates in Mg(2+) binding. (7,8-dihydropterin-6-yl)methyl diphosphate contacts are provided by residues Thr-320, Asp-357, Asn-376, Asp-449, Lys-494, and 529 to 531 (RVH).

It in the N-terminal section; belongs to the HPPK family. The protein in the C-terminal section; belongs to the DHPS family. Requires Mg(2+) as cofactor. In terms of tissue distribution, ubiquitous.

The protein resides in the mitochondrion. It catalyses the reaction 6-hydroxymethyl-7,8-dihydropterin + ATP = (7,8-dihydropterin-6-yl)methyl diphosphate + AMP + H(+). The enzyme catalyses (7,8-dihydropterin-6-yl)methyl diphosphate + 4-aminobenzoate = 7,8-dihydropteroate + diphosphate. It functions in the pathway cofactor biosynthesis; tetrahydrofolate biosynthesis; 2-amino-4-hydroxy-6-hydroxymethyl-7,8-dihydropteridine diphosphate from 7,8-dihydroneopterin triphosphate: step 4/4. The protein operates within cofactor biosynthesis; tetrahydrofolate biosynthesis; 7,8-dihydrofolate from 2-amino-4-hydroxy-6-hydroxymethyl-7,8-dihydropteridine diphosphate and 4-aminobenzoate: step 1/2. Functionally, catalyzes the first two consecutive steps of tetrahydrofolate biosynthesis. This Arabidopsis thaliana (Mouse-ear cress) protein is Folate synthesis bifunctional protein, mitochondrial.